Consider the following 79-residue polypeptide: Metallothionein-like protein type 2 (79 aa).

Belongs to the metallothionein superfamily. Type 15 family.

Metallothioneins have a high content of cysteine residues that bind various heavy metals. The chain is Metallothionein-like protein type 2 (MT1) from Malus domestica (Apple).